We begin with the raw amino-acid sequence, 114 residues long: Tyrosine-protein phosphatase 13 (114 aa).

The region spanning 1-114 is the Tyrosine-protein phosphatase domain; the sequence is WRMLWEHNST…QFGQEGPITI (114 aa). A substrate-binding site is contributed by Glu-82.

Belongs to the protein-tyrosine phosphatase family.

The catalysed reaction is O-phospho-L-tyrosyl-[protein] + H2O = L-tyrosyl-[protein] + phosphate. In Styela plicata (Wrinkled sea squirt), this protein is Tyrosine-protein phosphatase 13 (STY-13).